The following is a 518-amino-acid chain: Membrane-bound lytic murein transglycosylase F (518 aa).

An N-terminal signal peptide occupies residues 1–21 (MKKLKINYLFIGILALLLAVA). Positions 22-269 (LWPSIPWFGK…RIEEKYLGHG (248 aa)) are non-LT domain. The tract at residues 270–518 (DDFDYVDTRT…SRKGSEEKQN (249 aa)) is LT domain. E314 is a catalytic residue.

This sequence in the N-terminal section; belongs to the bacterial solute-binding protein 3 family. The protein in the C-terminal section; belongs to the transglycosylase Slt family.

Its subcellular location is the cell outer membrane. The enzyme catalyses Exolytic cleavage of the (1-&gt;4)-beta-glycosidic linkage between N-acetylmuramic acid (MurNAc) and N-acetylglucosamine (GlcNAc) residues in peptidoglycan, from either the reducing or the non-reducing ends of the peptidoglycan chains, with concomitant formation of a 1,6-anhydrobond in the MurNAc residue.. Its function is as follows. Murein-degrading enzyme that degrades murein glycan strands and insoluble, high-molecular weight murein sacculi, with the concomitant formation of a 1,6-anhydromuramoyl product. Lytic transglycosylases (LTs) play an integral role in the metabolism of the peptidoglycan (PG) sacculus. Their lytic action creates space within the PG sacculus to allow for its expansion as well as for the insertion of various structures such as secretion systems and flagella. The chain is Membrane-bound lytic murein transglycosylase F from Escherichia coli (strain SMS-3-5 / SECEC).